Reading from the N-terminus, the 382-residue chain is 6-oxocyclohex-1-ene-1-carbonyl-CoA hydrolase (382 aa).

It belongs to the enoyl-CoA hydratase/isomerase family. As to quaternary structure, homohexamer.

The enzyme catalyses 6-oxocyclohex-1-ene-1-carbonyl-CoA + 2 H2O = 3-hydroxy-6-carboxyhexanoyl-CoA + H(+). Its pathway is aromatic compound metabolism; benzoyl-CoA degradation. Functionally, involved in the central benzoyl-CoA catabolism. Catalyzes the addition of one molecule of water to the double bond and the hydrolytic cleavage of C-C bond in the alicyclic ring, 6-oxocyclohex-1-ene-1-carbonyl-CoA (6-OCH-CoA) to yield 3-hydroxypimelyl-CoA. The chain is 6-oxocyclohex-1-ene-1-carbonyl-CoA hydrolase from Syntrophus aciditrophicus (strain SB).